The following is a 387-amino-acid chain: Paralemmin-1 (387 aa).

At M1 the chain carries N-acetylmethionine. A coiled-coil region spans residues 7-104; sequence ETISQQERLQ…IEELENADTL (98 aa). Disordered stretches follow at residues 22 to 78 and 98 to 133; these read RRRQ…QEDE and LENADTLPAPVKETQVAPSPGPVVPAPCPAQEDRKA. 2 stretches are compositionally biased toward basic and acidic residues: residues 25 to 41 and 69 to 78; these read QAEVENRRRQLEDDRRQ and DMRKQMQEDE. Residue S116 is modified to Phosphoserine. The segment covering 116 to 125 has biased composition (pro residues); that stretch reads SPGPVVPAPC. Residues T142 and T146 each carry the phosphothreonine modification. Residue S163 is modified to Phosphoserine. Phosphothreonine is present on T244. Position 246 is a phosphoserine (S246). Disordered regions lie at residues 246–297 and 334–378; these read SEAG…QEPP and AAEP…DMKK. Basic and acidic residues predominate over residues 258 to 273; sequence GPSEEVVRTTPSRREI. Residues 286–297 are compositionally biased toward low complexity; it reads GPPGIQPGQEPP. A phosphoserine mark is found at S346 and S369. S-palmitoyl cysteine attachment occurs at residues C381 and C383. A Cysteine methyl ester modification is found at C384. C384 is lipidated: S-farnesyl cysteine. The propeptide at 385–387 is removed in mature form; it reads SIM.

It belongs to the paralemmin family. Interacts with dopamine receptor DRD3. Phosphorylated.

Its subcellular location is the cell membrane. The protein resides in the cell projection. It is found in the filopodium membrane. It localises to the axon. The protein localises to the dendrite. Its subcellular location is the dendritic spine. The protein resides in the basolateral cell membrane. It is found in the apicolateral cell membrane. Involved in plasma membrane dynamics and cell process formation. Necessary for axonal and dendritic filopodia induction, for dendritic spine maturation and synapse formation in a palmitoylation-dependent manner. The sequence is that of Paralemmin-1 (PALM) from Sus scrofa (Pig).